A 252-amino-acid chain; its full sequence is 5'-nucleotidase SurE (252 aa).

The a divalent metal cation site is built by aspartate 8, aspartate 9, serine 39, and asparagine 91.

It belongs to the SurE nucleotidase family. The cofactor is a divalent metal cation.

It is found in the cytoplasm. It carries out the reaction a ribonucleoside 5'-phosphate + H2O = a ribonucleoside + phosphate. Its function is as follows. Nucleotidase that shows phosphatase activity on nucleoside 5'-monophosphates. In Geobacter metallireducens (strain ATCC 53774 / DSM 7210 / GS-15), this protein is 5'-nucleotidase SurE.